A 147-amino-acid chain; its full sequence is Holo-[acyl-carrier-protein] synthase (147 aa).

2 residues coordinate Mg(2+): aspartate 7 and glutamate 60.

Belongs to the P-Pant transferase superfamily. AcpS family. It depends on Mg(2+) as a cofactor.

The protein localises to the cytoplasm. It catalyses the reaction apo-[ACP] + CoA = holo-[ACP] + adenosine 3',5'-bisphosphate + H(+). Functionally, transfers the 4'-phosphopantetheine moiety from coenzyme A to a Ser of acyl-carrier-protein. The protein is Holo-[acyl-carrier-protein] synthase of Bifidobacterium animalis subsp. lactis (strain AD011).